A 323-amino-acid chain; its full sequence is MPLRSVILGCGAYLPARVLTNEDLTRIVETSDEWIVERTGIKSRHIAADGENTSDLAEAAARAALAHAGVAAEEVDLIVLATATPDQTFPATATKVQARLGITRGAAFDVQAVCSGFVYALAIADNFIKAGQARTALVIGAETFSRILDWTDRTTCVLFGDGAGAVVLRAEEGEGTADRGILSTHLHSDGRHHDLLYVDGGPSTTQTVGHLRMKGQEVFKHAVVNLAHVVEEALAANGLSPADISWLVPHQANRRIIESTARKLKLDGSRVVLTVDHHGNTSAASIPLALCEAVHDGRVQRGDIVLLEAMGGGFTWGAALVRW.

Residues C114 and H250 contribute to the active site. The interval Q251–R255 is ACP-binding. N280 is a catalytic residue.

This sequence belongs to the thiolase-like superfamily. FabH family. Homodimer.

It is found in the cytoplasm. The catalysed reaction is malonyl-[ACP] + acetyl-CoA + H(+) = 3-oxobutanoyl-[ACP] + CO2 + CoA. It functions in the pathway lipid metabolism; fatty acid biosynthesis. In terms of biological role, catalyzes the condensation reaction of fatty acid synthesis by the addition to an acyl acceptor of two carbons from malonyl-ACP. Catalyzes the first condensation reaction which initiates fatty acid synthesis and may therefore play a role in governing the total rate of fatty acid production. Possesses both acetoacetyl-ACP synthase and acetyl transacylase activities. Its substrate specificity determines the biosynthesis of branched-chain and/or straight-chain of fatty acids. This is Beta-ketoacyl-[acyl-carrier-protein] synthase III from Rhodospirillum centenum (strain ATCC 51521 / SW).